The chain runs to 410 residues: Tryptophan synthase beta chain (410 aa).

Lys-98 carries the post-translational modification N6-(pyridoxal phosphate)lysine.

It belongs to the TrpB family. As to quaternary structure, tetramer of two alpha and two beta chains. It depends on pyridoxal 5'-phosphate as a cofactor.

The catalysed reaction is (1S,2R)-1-C-(indol-3-yl)glycerol 3-phosphate + L-serine = D-glyceraldehyde 3-phosphate + L-tryptophan + H2O. It participates in amino-acid biosynthesis; L-tryptophan biosynthesis; L-tryptophan from chorismate: step 5/5. Functionally, the beta subunit is responsible for the synthesis of L-tryptophan from indole and L-serine. This Dinoroseobacter shibae (strain DSM 16493 / NCIMB 14021 / DFL 12) protein is Tryptophan synthase beta chain.